A 327-amino-acid chain; its full sequence is Lipoyl synthase (327 aa).

The [4Fe-4S] cluster site is built by Cys-74, Cys-79, Cys-85, Cys-100, Cys-104, Cys-107, and Ser-314. Positions 86-303 (FSGGTATFMI…AEEGERMGFK (218 aa)) constitute a Radical SAM core domain.

This sequence belongs to the radical SAM superfamily. Lipoyl synthase family. [4Fe-4S] cluster serves as cofactor.

It localises to the cytoplasm. It catalyses the reaction [[Fe-S] cluster scaffold protein carrying a second [4Fe-4S](2+) cluster] + N(6)-octanoyl-L-lysyl-[protein] + 2 oxidized [2Fe-2S]-[ferredoxin] + 2 S-adenosyl-L-methionine + 4 H(+) = [[Fe-S] cluster scaffold protein] + N(6)-[(R)-dihydrolipoyl]-L-lysyl-[protein] + 4 Fe(3+) + 2 hydrogen sulfide + 2 5'-deoxyadenosine + 2 L-methionine + 2 reduced [2Fe-2S]-[ferredoxin]. It participates in protein modification; protein lipoylation via endogenous pathway; protein N(6)-(lipoyl)lysine from octanoyl-[acyl-carrier-protein]: step 2/2. Its function is as follows. Catalyzes the radical-mediated insertion of two sulfur atoms into the C-6 and C-8 positions of the octanoyl moiety bound to the lipoyl domains of lipoate-dependent enzymes, thereby converting the octanoylated domains into lipoylated derivatives. This chain is Lipoyl synthase, found in Pseudomonas paraeruginosa (strain DSM 24068 / PA7) (Pseudomonas aeruginosa (strain PA7)).